Here is a 470-residue protein sequence, read N- to C-terminus: Argininosuccinate lyase (470 aa).

The protein belongs to the lyase 1 family. Argininosuccinate lyase subfamily.

The protein resides in the cytoplasm. It carries out the reaction 2-(N(omega)-L-arginino)succinate = fumarate + L-arginine. It functions in the pathway amino-acid biosynthesis; L-arginine biosynthesis; L-arginine from L-ornithine and carbamoyl phosphate: step 3/3. This chain is Argininosuccinate lyase, found in Synechococcus sp. (strain WH7803).